A 281-amino-acid chain; its full sequence is MKYIGAHVSASGGVENAVLRSVEIGANAFALFTKNQRQWQAPPLKEDTIEKFKRFCQVHHFSPAQILPHDSYLINLGNPEAENLAKSREAFIDEMRRCDQLGLTLLNFHPGSHLNKISEQDCLARIAESINIAVDSVPNVVAVIENTAGQGSNLGWRFEHLAEIIEQVENKQRVGVCLDTCHLFSAGYDISSLASCEQTFADFDKVVGFEFLRGMHLNGSKTLLASRVDRHHTLREGTIGTDVFKFIMNNAHFDNIPLILETIEPEIWAEEINFLRSLEQN.

His69, His109, Glu145, Asp179, His182, His216, Asp229, His231, and Glu261 together coordinate Zn(2+).

It belongs to the AP endonuclease 2 family. Requires Zn(2+) as cofactor.

It catalyses the reaction Endonucleolytic cleavage to 5'-phosphooligonucleotide end-products.. Endonuclease IV plays a role in DNA repair. It cleaves phosphodiester bonds at apurinic or apyrimidinic (AP) sites, generating a 3'-hydroxyl group and a 5'-terminal sugar phosphate. The polypeptide is Probable endonuclease 4 (Glaesserella parasuis serovar 5 (strain SH0165) (Haemophilus parasuis)).